The following is a 746-amino-acid chain: Quiannulatene synthase (746 aa).

The interval 1 to 336 (MASEVIVISD…SRYPTKTELN (336 aa)) is sesterterpenoid synthase. D95 serves as a coordination point for Mg(2+). The geranylfarnesyl diphosphate synthase stretch occupies residues 338 to 746 (PEVIIVDGEL…VELMLRRLWV (409 aa)). Residues K465, R468, and H497 each coordinate isopentenyl diphosphate. 2 residues coordinate Mg(2+): D504 and D508. Residue R513 participates in dimethylallyl diphosphate binding. Position 514 (R514) interacts with isopentenyl diphosphate. Dimethylallyl diphosphate contacts are provided by K591, T592, Q628, N635, and K645.

It in the N-terminal section; belongs to the terpene synthase family. In the C-terminal section; belongs to the FPP/GGPP synthase family. Requires Mg(2+) as cofactor.

It catalyses the reaction isopentenyl diphosphate + (2E,6E)-farnesyl diphosphate = (2E,6E,10E)-geranylgeranyl diphosphate + diphosphate. The catalysed reaction is (2E,6E,10E,14E)-geranylfarnesyl diphosphate = quiannulatene + diphosphate. The protein operates within secondary metabolite biosynthesis; terpenoid biosynthesis. Its function is as follows. Bifunctional sesterterpene synthase; part of the gene cluster that mediates the biosynthesis of the pentacyclic sesterterpene quiannulatic acid. The first step of the pathway is performed by the sesterterpene synthase (QS) that possesses both prenyl transferase and terpene cyclase activity, converting isopentenyl diphosphate and dimethylallyl diphosphate into geranylfarnesyl diphosphate (GFPP) and further converting GFPP into quiannulatene via an unprecedented cyclization mode which involves three rounds of hydride shifts and two successive C-C bond migrations to construct the 5-6-5-5-5 fused ring. The cytochrome P450 monooxygenase Qnn-P450 then oxidizes quiannulatene at C-19 in 3 successive reactions to afford quiannulatic acid. This is Quiannulatene synthase from Emericella variicolor (Aspergillus stellatus).